A 109-amino-acid polypeptide reads, in one-letter code: Nucleoid-associated protein HAPS_1040 (109 aa).

The interval M1–M21 is disordered. The span at L10–E19 shows a compositional bias: low complexity.

This sequence belongs to the YbaB/EbfC family. As to quaternary structure, homodimer.

Its subcellular location is the cytoplasm. It is found in the nucleoid. Binds to DNA and alters its conformation. May be involved in regulation of gene expression, nucleoid organization and DNA protection. This Glaesserella parasuis serovar 5 (strain SH0165) (Haemophilus parasuis) protein is Nucleoid-associated protein HAPS_1040.